Here is a 245-residue protein sequence, read N- to C-terminus: MDGTRTSLDIEEYSDTEVQKNQVLTLEEWQDKWVNGKTAFHQEQGHQLLKKHLDTFLKGKSGLRVFFPLCGKAVEMKWFADRGHSVVGVEISELGIQEFFTEQNLSYSEEPITEIPGTKVFKSSSGNISLYCCSIFDLPRTNIGKFDMIWDRGALVAINPGDRKCYADTMLSLLGKKFQYLLCVLSYDPTKHPGPPFYVPHAEIERLFGKICNIRCLEKVDAFEERHKSWGIDCLFEKLYLLTEK.

A Phosphoserine modification is found at S14. Position 29 to 40 (29 to 40 (WQDKWVNGKTAF)) interacts with S-adenosyl-L-methionine. F40 lines the substrate pocket. Residue K58 is modified to N6-acetyllysine. S-adenosyl-L-methionine-binding positions include L69, E90, 134–135 (SI), and R152.

The protein belongs to the class I-like SAM-binding methyltransferase superfamily. TPMT family. As to quaternary structure, monomer.

It is found in the cytoplasm. It catalyses the reaction S-adenosyl-L-methionine + a thiopurine = S-adenosyl-L-homocysteine + a thiopurine S-methylether.. This Gorilla gorilla gorilla (Western lowland gorilla) protein is Thiopurine S-methyltransferase (TPMT).